Here is a 261-residue protein sequence, read N- to C-terminus: 1-(5-phosphoribosyl)-5-[(5-phosphoribosylamino)methylideneamino] imidazole-4-carboxamide isomerase (261 aa).

Residue D8 is the Proton acceptor of the active site. The active-site Proton donor is the D130.

This sequence belongs to the HisA/HisF family.

It localises to the cytoplasm. It carries out the reaction 1-(5-phospho-beta-D-ribosyl)-5-[(5-phospho-beta-D-ribosylamino)methylideneamino]imidazole-4-carboxamide = 5-[(5-phospho-1-deoxy-D-ribulos-1-ylimino)methylamino]-1-(5-phospho-beta-D-ribosyl)imidazole-4-carboxamide. It functions in the pathway amino-acid biosynthesis; L-histidine biosynthesis; L-histidine from 5-phospho-alpha-D-ribose 1-diphosphate: step 4/9. The chain is 1-(5-phosphoribosyl)-5-[(5-phosphoribosylamino)methylideneamino] imidazole-4-carboxamide isomerase from Prosthecochloris aestuarii (strain DSM 271 / SK 413).